We begin with the raw amino-acid sequence, 154 residues long: Myoglobin (154 aa).

Positions 2–148 constitute a Globin domain; the sequence is GLSDGEWQLV…FRNDMAAKYK (147 aa). Serine 4 carries the phosphoserine modification. Nitrite is bound at residue histidine 65. Residue histidine 65 participates in O2 binding. Position 68 is a phosphothreonine (threonine 68). A heme b-binding site is contributed by histidine 94.

This sequence belongs to the globin family. As to quaternary structure, monomeric.

It is found in the cytoplasm. The protein resides in the sarcoplasm. It catalyses the reaction Fe(III)-heme b-[protein] + nitric oxide + H2O = Fe(II)-heme b-[protein] + nitrite + 2 H(+). It carries out the reaction H2O2 + AH2 = A + 2 H2O. Its function is as follows. Monomeric heme protein which primary function is to store oxygen and facilitate its diffusion within muscle tissues. Reversibly binds oxygen through a pentacoordinated heme iron and enables its timely and efficient release as needed during periods of heightened demand. Depending on the oxidative conditions of tissues and cells, and in addition to its ability to bind oxygen, it also has a nitrite reductase activity whereby it regulates the production of bioactive nitric oxide. Under stress conditions, like hypoxia and anoxia, it also protects cells against reactive oxygen species thanks to its pseudoperoxidase activity. In Sus scrofa (Pig), this protein is Myoglobin (MB).